The sequence spans 172 residues: 3-hydroxydecanoyl-[acyl-carrier-protein] dehydratase (172 aa).

His-71 is an active-site residue.

The protein belongs to the thioester dehydratase family. FabA subfamily. In terms of assembly, homodimer.

It is found in the cytoplasm. It catalyses the reaction a (3R)-hydroxyacyl-[ACP] = a (2E)-enoyl-[ACP] + H2O. It carries out the reaction (3R)-hydroxydecanoyl-[ACP] = (2E)-decenoyl-[ACP] + H2O. The catalysed reaction is (2E)-decenoyl-[ACP] = (3Z)-decenoyl-[ACP]. It functions in the pathway lipid metabolism; fatty acid biosynthesis. Functionally, necessary for the introduction of cis unsaturation into fatty acids. Catalyzes the dehydration of (3R)-3-hydroxydecanoyl-ACP to E-(2)-decenoyl-ACP and then its isomerization to Z-(3)-decenoyl-ACP. Can catalyze the dehydratase reaction for beta-hydroxyacyl-ACPs with saturated chain lengths up to 16:0, being most active on intermediate chain length. The chain is 3-hydroxydecanoyl-[acyl-carrier-protein] dehydratase from Escherichia coli O139:H28 (strain E24377A / ETEC).